The following is a 452-amino-acid chain: UPF0210 protein Daud_1353 (452 aa).

Belongs to the UPF0210 family. As to quaternary structure, homodimer.

This is UPF0210 protein Daud_1353 from Desulforudis audaxviator (strain MP104C).